A 299-amino-acid polypeptide reads, in one-letter code: Taste receptor type 2 member 50 (299 aa).

A topological domain (extracellular) is located at residue Met-1. A helical membrane pass occupies residues 2–22; it reads ITFLYIFFSILIMVLFVLGNF. The Cytoplasmic segment spans residues 23 to 55; the sequence is ANGFIALVNFIDWVKRKKISSADQILTALAVSR. Residues 56–76 form a helical membrane-spanning segment; it reads IGLLWALLLNWYLTVLNPAFY. At 77-87 the chain is on the extracellular side; sequence SVELRITSYNA. The chain crosses the membrane as a helical span at residues 88–108; sequence WVVTNHFSMWLAANLSIFYLL. The Cytoplasmic portion of the chain corresponds to 109-126; the sequence is KIANFSNLLFLHLKRRVR. A helical membrane pass occupies residues 127–147; sequence SVILVILLGTLIFLVCHLLVA. Over 148–181 the chain is Extracellular; sequence NMDESMWAEEYEGNMTGKMKLRNTVHLSYLTVTT. N-linked (GlcNAc...) asparagine glycosylation is present at Asn-161. Residues 182-202 traverse the membrane as a helical segment; sequence LWSFIPFTLSLISFLMLICSL. The Cytoplasmic segment spans residues 203 to 229; it reads CKHLKKMQLHGEGSQDLSTKVHIKALQ. A helical membrane pass occupies residues 230-250; the sequence is TLISFLLLCAIFFLFLIVSVW. The Extracellular portion of the chain corresponds to 251 to 259; the sequence is SPRRLRNDP. A helical transmembrane segment spans residues 260-280; it reads VVMVSKAVGNIYLAFDSFILI. Residues 281 to 299 lie on the Cytoplasmic side of the membrane; sequence WRTKKLKHTFLLILCQIRC.

Belongs to the G-protein coupled receptor T2R family. As to expression, expressed in subsets of taste receptor cells of the tongue and exclusively in gustducin-positive cells.

Its subcellular location is the membrane. Its function is as follows. Receptor that may play a role in the perception of bitterness and is gustducin-linked. May play a role in sensing the chemical composition of the gastrointestinal content. The activity of this receptor may stimulate alpha gustducin, mediate PLC-beta-2 activation and lead to the gating of TRPM5. This chain is Taste receptor type 2 member 50 (TAS2R50), found in Homo sapiens (Human).